The primary structure comprises 427 residues: Lactadherin (427 aa).

Positions 1 to 18 (MPCPRLLAALFCSSGLFA) are cleaved as a signal peptide. 2 consecutive EGF-like domains span residues 20–59 (SGDFCDSSLCLHGGTCLLNEDRTPPFYCLCPEGFTGLLCN) and 62–106 (EHGP…IHCE). Cystine bridges form between C24/C35, C29/C47, and C49/C58. An O-linked (Fuc...) serine; in PAS-6 glycan is attached at S27. The O-linked (Fuc...) threonine; in PAS-7 glycan is linked to T34. A glycan (N-linked (GlcNAc...) (hybrid) asparagine; in PAS-6 and PAS-7) is linked at N59. Cystine bridges form between C66–C77, C71–C94, C96–C105, C109–C265, C252–C256, and C270–C427. The Cell attachment site signature appears at 85–87 (RGD). F5/8 type C domains lie at 109-265 (CTSP…LLGC) and 270-427 (CTEP…LLGC). N227 carries an N-linked (GlcNAc...) (high mannose) asparagine; in PAS-6 glycan.

The two O-linked glycans consist of Gal, GlcNAc and Fuc, with probably Fuc as reducing terminal sugar. In terms of tissue distribution, milk and spermatozoan. Also present in epididymis, kidney, heart, lymphatic gland and spleen but not esophagus, small intestine, muscle and liver.

It is found in the membrane. The protein resides in the secreted. The protein localises to the cytoplasmic vesicle. Its subcellular location is the secretory vesicle. It localises to the acrosome membrane. In terms of biological role, contributes to phagocytic removal of apoptotic cells in many tissues. Plays an important role in the maintenance of intestinal epithelial homeostasis and the promotion of mucosal healing. Promotes VEGF-dependent neovascularization. Specific ligand for the alpha-v/beta-3 and alpha-v/beta-5 receptors. Also binds to phosphatidylserine-enriched cell surfaces in a receptor-independent manner. Zona pellucida-binding protein which may play a role in gamete interaction. The sequence is that of Lactadherin (MFGE8) from Bos taurus (Bovine).